Consider the following 236-residue polypeptide: LHFPL tetraspan subfamily member 3 protein (236 aa).

4 consecutive transmembrane segments (helical) span residues 36 to 56 (IGVL…VCFI), 110 to 130 (FFIG…TLFF), 140 to 160 (ICAW…MIFP), and 191 to 211 (ILAI…FVLG).

Belongs to the LHFP family.

It is found in the membrane. This Homo sapiens (Human) protein is LHFPL tetraspan subfamily member 3 protein.